Here is a 114-residue protein sequence, read N- to C-terminus: MEVRAIYKMARISPFKSRDVARSIKGMDARDAFNVLAFYPKKAARLIRKTLGSAIANAENNHNLRAQDLYVKGVFVDEGPKFRRYQPKARGSAGIIRKRTAHICVVLDEKENKS.

This sequence belongs to the universal ribosomal protein uL22 family. In terms of assembly, part of the 50S ribosomal subunit.

This protein binds specifically to 23S rRNA; its binding is stimulated by other ribosomal proteins, e.g. L4, L17, and L20. It is important during the early stages of 50S assembly. It makes multiple contacts with different domains of the 23S rRNA in the assembled 50S subunit and ribosome. Functionally, the globular domain of the protein is located near the polypeptide exit tunnel on the outside of the subunit, while an extended beta-hairpin is found that lines the wall of the exit tunnel in the center of the 70S ribosome. This Methylacidiphilum infernorum (isolate V4) (Methylokorus infernorum (strain V4)) protein is Large ribosomal subunit protein uL22.